A 276-amino-acid chain; its full sequence is Phosphatidylglycerol--prolipoprotein diacylglyceryl transferase (276 aa).

3 helical membrane passes run 17–37, 63–83, and 95–115; these read LAIH…FFLA, ILFL…CLFY, and ILAV…VLAS. Arg-146 provides a ligand contact to a 1,2-diacyl-sn-glycero-3-phospho-(1'-sn-glycerol). The next 3 membrane-spanning stretches (helical) occupy residues 182–202, 209–229, and 235–255; these read SQVY…WLYA, GQVS…AEYF, and FLGI…PMIV.

The protein belongs to the Lgt family.

Its subcellular location is the cell inner membrane. The catalysed reaction is L-cysteinyl-[prolipoprotein] + a 1,2-diacyl-sn-glycero-3-phospho-(1'-sn-glycerol) = an S-1,2-diacyl-sn-glyceryl-L-cysteinyl-[prolipoprotein] + sn-glycerol 1-phosphate + H(+). It functions in the pathway protein modification; lipoprotein biosynthesis (diacylglyceryl transfer). In terms of biological role, catalyzes the transfer of the diacylglyceryl group from phosphatidylglycerol to the sulfhydryl group of the N-terminal cysteine of a prolipoprotein, the first step in the formation of mature lipoproteins. The sequence is that of Phosphatidylglycerol--prolipoprotein diacylglyceryl transferase from Polaromonas sp. (strain JS666 / ATCC BAA-500).